The chain runs to 158 residues: Endoribonuclease YbeY (158 aa).

3 residues coordinate Zn(2+): His118, His122, and His128.

This sequence belongs to the endoribonuclease YbeY family. It depends on Zn(2+) as a cofactor.

Its subcellular location is the cytoplasm. Functionally, single strand-specific metallo-endoribonuclease involved in late-stage 70S ribosome quality control and in maturation of the 3' terminus of the 16S rRNA. The protein is Endoribonuclease YbeY of Haemophilus ducreyi (strain 35000HP / ATCC 700724).